The chain runs to 172 residues: MRILCDACESAAAIVFCAADEAALCCSCDEKVHKCNKLASRHLRVGLADPSNAPSCDICENAPAFFYCEIDGSSLCLQCDMVVHVGGKRTHRRFLLLRQRIEFPGDKPNHADQLGLRCQKASSGRGQESNGNGDHDHNMIDLNSNPQRVHEPGSHNQEEGIDVNNANNHEHE.

The Zn(2+) site is built by Cys-5, Cys-8, Cys-28, His-33, Cys-56, Cys-59, Cys-79, and His-84. A B box-type 1; atypical zinc finger spans residues Cys-5–Leu-47. A B box-type 2; atypical zinc finger spans residues Cys-56 to Leu-96. Residues Gln-119–Glu-172 are disordered. The segment covering Lys-120–Asn-132 has biased composition (polar residues). Basic and acidic residues predominate over residues Arg-148–Glu-158.

As to expression, expressed in vasculature of leaves and petioles.

The protein localises to the nucleus. Functionally, acts as a negative regulator of seedling photomorphogenesis. Acts as a negative regulator of blue light-mediated inhibition of hypocotyl elongation through increase of bioactive gibberellin levels. Acts as a repressor of thermotolerance by modulating expression of a set of heat shock-responsive genes. The sequence is that of B-box zinc finger protein 18 from Arabidopsis thaliana (Mouse-ear cress).